Reading from the N-terminus, the 536-residue chain is Membrane protein insertase YidC (536 aa).

Residues 7 to 27 (IIAVVLSLFVLIGWSYLSEFM) traverse the membrane as a helical segment. A disordered region spans residues 43–70 (VQQKASEPVAQPVQTASAPAASSFAPTE). Over residues 58 to 68 (ASAPAASSFAP) the composition is skewed to low complexity. Transmembrane regions (helical) follow at residues 346–366 (GNYGVAIIILTILVKLLFWPL), 415–435 (GGCLPMLLQIPVFLGLYQGLL), and 495–515 (IMMFMPVVFTFMFLNFPAGLV).

The protein belongs to the OXA1/ALB3/YidC family. Type 1 subfamily. Interacts with the Sec translocase complex via SecD. Specifically interacts with transmembrane segments of nascent integral membrane proteins during membrane integration.

Its subcellular location is the cell inner membrane. Its function is as follows. Required for the insertion and/or proper folding and/or complex formation of integral membrane proteins into the membrane. Involved in integration of membrane proteins that insert both dependently and independently of the Sec translocase complex, as well as at least some lipoproteins. Aids folding of multispanning membrane proteins. The chain is Membrane protein insertase YidC from Oleidesulfovibrio alaskensis (strain ATCC BAA-1058 / DSM 17464 / G20) (Desulfovibrio alaskensis).